The sequence spans 290 residues: Pyridoxal kinase PdxY (290 aa).

Substrate contacts are provided by residues serine 12 and 47 to 48 (TQ). Residues aspartate 114, glutamate 151, lysine 184, and 211–214 (RPLL) each bind ATP. Aspartate 225 lines the substrate pocket.

The protein belongs to the pyridoxine kinase family. PdxY subfamily. In terms of assembly, homodimer. Mg(2+) serves as cofactor.

It catalyses the reaction pyridoxal + ATP = pyridoxal 5'-phosphate + ADP + H(+). It participates in cofactor metabolism; pyridoxal 5'-phosphate salvage; pyridoxal 5'-phosphate from pyridoxal: step 1/1. In terms of biological role, pyridoxal kinase involved in the salvage pathway of pyridoxal 5'-phosphate (PLP). Catalyzes the phosphorylation of pyridoxal to PLP. The chain is Pyridoxal kinase PdxY from Pseudomonas putida (strain GB-1).